Reading from the N-terminus, the 253-residue chain is Tetraspanin-3 (253 aa).

Residues 1-11 (MGQCGITSSKT) lie on the Cytoplasmic side of the membrane. The helical transmembrane segment at 12–32 (VLVFLNLIFWGAAGILCYVGA) threads the bilayer. At 33-50 (YVFITYDDYDHFFEDVYT) the chain is on the extracellular side. The helical transmembrane segment at 51-71 (LIPAVVIIAVGALLFIIGLIG) threads the bilayer. Residues 72-85 (CCATIRESRCGLAT) lie on the Cytoplasmic side of the membrane. Residues 86–106 (FVIILLLVFVTEVVVVVLGYV) traverse the membrane as a helical segment. The Extracellular segment spans residues 107 to 212 (YRAKVENEVD…KKLQEIMMHV (106 aa)). 4 N-linked (GlcNAc...) asparagine glycosylation sites follow: Asn127, Asn152, Asn167, and Asn183. Residues 213–233 (IWAALAFAAIQLLGMLCACIV) form a helical membrane-spanning segment. Topologically, residues 234-253 (LCRRSRDPAYELLITGGAYA) are cytoplasmic.

It belongs to the tetraspanin (TM4SF) family. Interacts with claudin-11/CLDN11 and integrins.

The protein resides in the membrane. Its function is as follows. Regulates the proliferation and migration of oligodendrocytes, a process essential for normal myelination and repair. In Bos taurus (Bovine), this protein is Tetraspanin-3 (TSPAN3).